We begin with the raw amino-acid sequence, 925 residues long: Nonribosomal peptide synthetase apvA (925 aa).

Residues 15–436 (AREDSGHVVV…TGRAKENMII (422 aa)) are adenylation (A) domain. The Carrier domain occupies 564–644 (EPQNDLEKTL…DLATALEKLQ (81 aa)). The residue at position 601 (Ser601) is an O-(pantetheine 4'-phosphoryl)serine. The tract at residues 663–909 (PLWLVHPGAG…HYSMIGPDHV (247 aa)) is thioesterase (TE) domain.

Belongs to the NRP synthetase family. In terms of tissue distribution, apvA specifically produces aspulvinone E in hyphea, in contrast to melA which produces aspulvinone E in conidia where it is converted to UV-protective Asp-melanin.

It catalyses the reaction 2 3-(4-hydroxyphenyl)pyruvate + AH2 + 2 ATP + O2 = aspulvinone E + A + 2 AMP + CO2 + 2 diphosphate + H2O + H(+). Its pathway is secondary metabolite biosynthesis. Its function is as follows. Nonribosomal peptide synthetase; part of the gene cluster that mediates the biosynthesis of aspulvinones. The nonribosomal peptide synthetase apvA is responsible for the production of aspulvinone E, the core structure of aspulvinones. ApvA first activates 4-hydroxyphenylpyruvate (HPPA) through its A domain to AMP-HPPA. The HPPA unit is then loaded to the T domain and eventually transferred to the TE domain. Upon loading of another HPPA unit to the T domain, the TE domain promotes the enolate formation on the unit attached. The next step involves head to tail Claisen condensation, followed by the keto-enol tautermerization and a nucleophilic attack on the carbonyl carbon to yield the furanone partial structure. A spontaneous oxidation at the beta-carbon of the thioester might occur in aerobic condition. The TE domain then catalyzes the hydrolysis of the thioester, followed by spontaneous decarboxylation, dehydroxylation and keto-enol tautermerization to give the aspulvinone core. Aspulvinone E is highly unstable and converted to isoaspulvinone E in the presence of light. The structural diversity of the aspulvinones suggests that other tailoring enzymes are involved and have still to be identified. This chain is Nonribosomal peptide synthetase apvA, found in Aspergillus terreus (strain NIH 2624 / FGSC A1156).